The sequence spans 589 residues: Carbonic anhydrase (589 aa).

Alpha-carbonic anhydrase domains follow at residues 59-316 (HDYN…YEYK) and 321-585 (DKYN…YGYN). 258-259 (TT) is a binding site for substrate. Positions 390-589 (MQINFGDPPA…TVYGYNGAAA (200 aa)) are catalytic. 3 residues coordinate Zn(2+): His-420, His-422, and His-440.

The protein belongs to the alpha-carbonic anhydrase family. It depends on Zn(2+) as a cofactor.

The catalysed reaction is hydrogencarbonate + H(+) = CO2 + H2O. Reversible hydration of carbon dioxide. The sequence is that of Carbonic anhydrase (DCA) from Dunaliella salina (Green alga).